Consider the following 623-residue polypeptide: Glutathione import ATP-binding protein GsiA (623 aa).

ABC transporter domains follow at residues 15-269 and 314-564; these read VENL…RALL and LRVR…RKLL. ATP contacts are provided by residues 49-56 and 357-364; these read GESGSGKS.

Belongs to the ABC transporter superfamily. Glutathione importer (TC 3.A.1.5.11) family. As to quaternary structure, the complex is composed of two ATP-binding proteins (GsiA), two transmembrane proteins (GsiC and GsiD) and a solute-binding protein (GsiB).

The protein localises to the cell inner membrane. It catalyses the reaction glutathione(out) + ATP + H2O = glutathione(in) + ADP + phosphate + H(+). In terms of biological role, part of the ABC transporter complex GsiABCD involved in glutathione import. Responsible for energy coupling to the transport system. In Shigella sonnei (strain Ss046), this protein is Glutathione import ATP-binding protein GsiA.